We begin with the raw amino-acid sequence, 140 residues long: Organic hydroperoxide resistance protein-like (140 aa).

This sequence belongs to the OsmC/Ohr family.

This is Organic hydroperoxide resistance protein-like from Mycoplasma genitalium (strain ATCC 33530 / DSM 19775 / NCTC 10195 / G37) (Mycoplasmoides genitalium).